Here is a 398-residue protein sequence, read N- to C-terminus: Arginine biosynthesis bifunctional protein ArgJ (398 aa).

The substrate site is built by threonine 148, lysine 174, threonine 185, glutamate 271, asparagine 393, and threonine 398. Threonine 185 functions as the Nucleophile in the catalytic mechanism.

It belongs to the ArgJ family. In terms of assembly, heterotetramer of two alpha and two beta chains.

It is found in the cytoplasm. The catalysed reaction is N(2)-acetyl-L-ornithine + L-glutamate = N-acetyl-L-glutamate + L-ornithine. The enzyme catalyses L-glutamate + acetyl-CoA = N-acetyl-L-glutamate + CoA + H(+). It functions in the pathway amino-acid biosynthesis; L-arginine biosynthesis; L-ornithine and N-acetyl-L-glutamate from L-glutamate and N(2)-acetyl-L-ornithine (cyclic): step 1/1. The protein operates within amino-acid biosynthesis; L-arginine biosynthesis; N(2)-acetyl-L-ornithine from L-glutamate: step 1/4. In terms of biological role, catalyzes two activities which are involved in the cyclic version of arginine biosynthesis: the synthesis of N-acetylglutamate from glutamate and acetyl-CoA as the acetyl donor, and of ornithine by transacetylation between N(2)-acetylornithine and glutamate. This chain is Arginine biosynthesis bifunctional protein ArgJ, found in Listeria monocytogenes serovar 1/2a (strain ATCC BAA-679 / EGD-e).